The following is a 312-amino-acid chain: MAAQKINEGLEHLAKAEKYLKTGFLKWKPDYDSAASEYGKAAVAFKNAKQFEQAKDACLREAVAHENNRALFHAAKAYEQAGMMLKEMQKLPEAVQLIEKASMMYLENGTPDTAAMALERAGKLIENVDPEKAVQLYQQTANVFENEERLRQAVELLGKASRLLVRGRRFDEAALSIQKEKNIYKEIENYPTCYKKTIAQVLVHLHRNDYVAAERCVRESYSIPGFNGSEDCAALEQLLEGYDQQDQDQVSDVCNSPLFKYMDNDYAKLGLSLVVPGGGIKKKSPATPQAKPDGVTATAADEEEDEYSGGLC.

The segment at 281-312 is disordered; the sequence is KKKSPATPQAKPDGVTATAADEEEDEYSGGLC. Ser284 carries the post-translational modification Phosphoserine. A Phosphothreonine modification is found at Thr287. The span at 300 to 312 shows a compositional bias: acidic residues; that stretch reads ADEEEDEYSGGLC. Phosphoserine is present on Ser308.

It belongs to the SNAP family. Interacts with RAB11FIP5. Interacts with VTI1A.

The protein resides in the membrane. It is found in the golgi apparatus. Its function is as follows. Required for vesicular transport between the endoplasmic reticulum and the Golgi apparatus. This Homo sapiens (Human) protein is Gamma-soluble NSF attachment protein.